The primary structure comprises 247 residues: MKNYKFTISFVGTNYSGWQYQPNVPTIQNEVEEKLYYIVNKKKPIKQKIRAIGCSRTDKGVHAIEFVFNVKMEFDKDLNFLRKALNSALPKDIKIHNIEEVPLEFNSRFDALKKTYIYKLFFDEKNSPFFQDRAMLVYKPTDLGKMMEISHLFLGYKDFRGFTKELEDENGYCSVENITFKVDYPLVEISITANRFLRYMVRRMVGTMLSYAQGLISIDDVNDFLKAKRVSNHTAKAHGLYLKKVYY.

D58 acts as the Nucleophile in catalysis. A substrate-binding site is contributed by Y116.

This sequence belongs to the tRNA pseudouridine synthase TruA family. As to quaternary structure, homodimer.

The catalysed reaction is uridine(38/39/40) in tRNA = pseudouridine(38/39/40) in tRNA. Formation of pseudouridine at positions 38, 39 and 40 in the anticodon stem and loop of transfer RNAs. This chain is tRNA pseudouridine synthase A, found in Hydrogenobaculum sp. (strain Y04AAS1).